Reading from the N-terminus, the 337-residue chain is tRNA N6-adenosine threonylcarbamoyltransferase (337 aa).

Fe cation is bound by residues His111 and His115. Substrate-binding positions include 134–138 (LVSGG), Asp167, Gly180, and Asn272. Asp300 contacts Fe cation.

It belongs to the KAE1 / TsaD family. Fe(2+) is required as a cofactor.

It is found in the cytoplasm. It catalyses the reaction L-threonylcarbamoyladenylate + adenosine(37) in tRNA = N(6)-L-threonylcarbamoyladenosine(37) in tRNA + AMP + H(+). Functionally, required for the formation of a threonylcarbamoyl group on adenosine at position 37 (t(6)A37) in tRNAs that read codons beginning with adenine. Is involved in the transfer of the threonylcarbamoyl moiety of threonylcarbamoyl-AMP (TC-AMP) to the N6 group of A37, together with TsaE and TsaB. TsaD likely plays a direct catalytic role in this reaction. This Escherichia coli O139:H28 (strain E24377A / ETEC) protein is tRNA N6-adenosine threonylcarbamoyltransferase.